A 327-amino-acid chain; its full sequence is MEAIKGSEVNVPDAVFAWLLDGRGGIKPLENDDIIDSQHPCWLHLNYTHPDSAQWLASTPLLPNSVRDALAGESSRPRVSRMGEGTLITLRCINGSTDERPDQLVAMRVYMDERFIVSTRQRKVLALDEVVSDLQEGTGPSDCGGWLVDVCDALTDHASEFIEQLHDKIIDLEDNLLDQQIPPRGFLALLRKQLIVMRRYMAPQRDVYARLASERLAWMNDDQRRRMQDIADRLGRGLDEIDACIARTGVMADEIAQVMQESLARRTYTMSLMAMVFLPSTFLTGLFGVNLGGIPGGAWHFGFSMFCILLVVLIGGVTLWLHRSKWL.

Residues 1 to 273 lie on the Cytoplasmic side of the membrane; sequence MEAIKGSEVN…ARRTYTMSLM (273 aa). A helical membrane pass occupies residues 274-294; the sequence is AMVFLPSTFLTGLFGVNLGGI. Topologically, residues 295–300 are periplasmic; it reads PGGAWH. Residues 301–321 form a helical membrane-spanning segment; sequence FGFSMFCILLVVLIGGVTLWL. Over 322-327 the chain is Cytoplasmic; sequence HRSKWL.

It belongs to the CorA metal ion transporter (MIT) (TC 1.A.35) family.

It localises to the cell inner membrane. The catalysed reaction is Zn(2+)(out) + H(+)(out) = Zn(2+)(in) + H(+)(in). Functionally, zinc transporter. Acts as a Zn(2+):proton symporter, which likely mediates zinc ion uptake. The protein is Zinc transport protein ZntB of Citrobacter koseri (strain ATCC BAA-895 / CDC 4225-83 / SGSC4696).